Consider the following 182-residue polypeptide: Crossover junction endodeoxyribonuclease RuvC (182 aa).

Active-site residues include D7, E69, and D141. Residues D7, E69, and D141 each coordinate Mg(2+).

This sequence belongs to the RuvC family. Homodimer which binds Holliday junction (HJ) DNA. The HJ becomes 2-fold symmetrical on binding to RuvC with unstacked arms; it has a different conformation from HJ DNA in complex with RuvA. In the full resolvosome a probable DNA-RuvA(4)-RuvB(12)-RuvC(2) complex forms which resolves the HJ. It depends on Mg(2+) as a cofactor.

The protein localises to the cytoplasm. It carries out the reaction Endonucleolytic cleavage at a junction such as a reciprocal single-stranded crossover between two homologous DNA duplexes (Holliday junction).. Its function is as follows. The RuvA-RuvB-RuvC complex processes Holliday junction (HJ) DNA during genetic recombination and DNA repair. Endonuclease that resolves HJ intermediates. Cleaves cruciform DNA by making single-stranded nicks across the HJ at symmetrical positions within the homologous arms, yielding a 5'-phosphate and a 3'-hydroxyl group; requires a central core of homology in the junction. The consensus cleavage sequence is 5'-(A/T)TT(C/G)-3'. Cleavage occurs on the 3'-side of the TT dinucleotide at the point of strand exchange. HJ branch migration catalyzed by RuvA-RuvB allows RuvC to scan DNA until it finds its consensus sequence, where it cleaves and resolves the cruciform DNA. The polypeptide is Crossover junction endodeoxyribonuclease RuvC (Polaromonas naphthalenivorans (strain CJ2)).